Consider the following 571-residue polypeptide: Proline--tRNA ligase (571 aa).

This sequence belongs to the class-II aminoacyl-tRNA synthetase family. ProS type 1 subfamily. In terms of assembly, homodimer.

It is found in the cytoplasm. It carries out the reaction tRNA(Pro) + L-proline + ATP = L-prolyl-tRNA(Pro) + AMP + diphosphate. Its function is as follows. Catalyzes the attachment of proline to tRNA(Pro) in a two-step reaction: proline is first activated by ATP to form Pro-AMP and then transferred to the acceptor end of tRNA(Pro). As ProRS can inadvertently accommodate and process non-cognate amino acids such as alanine and cysteine, to avoid such errors it has two additional distinct editing activities against alanine. One activity is designated as 'pretransfer' editing and involves the tRNA(Pro)-independent hydrolysis of activated Ala-AMP. The other activity is designated 'posttransfer' editing and involves deacylation of mischarged Ala-tRNA(Pro). The misacylated Cys-tRNA(Pro) is not edited by ProRS. This chain is Proline--tRNA ligase, found in Shewanella baltica (strain OS195).